We begin with the raw amino-acid sequence, 336 residues long: Antigen-presenting glycoprotein CD1d1 (336 aa).

Positions 1-21 are cleaved as a signal peptide; the sequence is MRYLPWLLLWAFLQVWGQSEA. The Extracellular segment spans residues 22–305; it reads QQKNYTFRCL…YWDARQAPVG (284 aa). 3 N-linked (GlcNAc...) asparagine glycosylation sites follow: Asn-25, Asn-38, and Asn-60. An a D-galactosylceramide-binding site is contributed by Asp-98. Cystine bridges form between Cys-122–Cys-186 and Cys-226–Cys-281. A glycan (N-linked (GlcNAc...) asparagine) is linked at Asn-128. 171-174 is an a D-galactosylceramide binding site; the sequence is DQGT. The N-linked (GlcNAc...) asparagine glycan is linked to Asn-183. The region spanning 207–297 is the Ig-like domain; the sequence is PVAWLSSVPS…LGGQDIILYW (91 aa). A helical membrane pass occupies residues 306 to 326; that stretch reads LIVFIVLIMLVVVGAVVYYIW. Residues 327–336 are Cytoplasmic-facing; that stretch reads RRRSAYQDIR. Positions 332–335 match the Internalization signal motif; it reads YQDI.

As to quaternary structure, heterodimer with B2M (beta-2-microglobulin). Interacts with MHC II and CD74. In terms of processing, N-glycosylated. In terms of tissue distribution, expressed on cortical thymocytes, on certain T-cell leukemias, and in various other tissues.

Its subcellular location is the cell membrane. The protein localises to the endosome membrane. It localises to the lysosome membrane. Antigen-presenting protein that binds self and non-self glycolipids and presents them to T-cell receptors on natural killer T-cells. The chain is Antigen-presenting glycoprotein CD1d1 (Cd1d1) from Mus musculus (Mouse).